Here is a 452-residue protein sequence, read N- to C-terminus: Friend leukemia integration 1 transcription factor (452 aa).

Serine 39 bears the Phosphoserine mark. The PNT domain occupies 112–198; that stretch reads PPPPNMTTNE…SHLTYLRESS (87 aa). A compositionally biased stretch (polar residues) spans 202-214; the sequence is YNTTSHTDPSSRL. Residues 202–272 form a disordered region; the sequence is YNTTSHTDPS…YQILGPTSSR (71 aa). Residues 215–226 are compositionally biased toward basic and acidic residues; the sequence is NVKEDPSYDSVR. Positions 248–257 are enriched in polar residues; sequence QTMSKNTEQR. A DNA-binding region (ETS) is located at residues 281–361; it reads IQLWQFLLEL…HGKRYAYKFD (81 aa).

It belongs to the ETS family. In terms of assembly, can form homodimers or heterodimers with ETV6/TEL1.

It localises to the nucleus. Sequence-specific transcriptional activator. Recognizes the DNA sequence 5'-C[CA]GGAAGT-3'. In Bos taurus (Bovine), this protein is Friend leukemia integration 1 transcription factor (FLI1).